Here is a 477-residue protein sequence, read N- to C-terminus: Peptidyl-prolyl cis-trans isomerase FKBP53 (477 aa).

Disordered regions lie at residues 104–135 (DYEH…EDEQ) and 153–366 (AAAP…QVRT). Over residues 264-274 (KSKKKKNQKEK) the composition is skewed to basic residues. The segment covering 299–321 (ISQISSNTKAQDGTANNAMSESS) has biased composition (polar residues). A compositionally biased stretch (basic and acidic residues) spans 322 to 331 (KTPDKSAEKK). The segment covering 351–366 (VEKQTPADSKSSQVRT) has biased composition (polar residues). The 89-residue stretch at 389-477 (GKTVSVRYIG…TFDVELINVQ (89 aa)) folds into the PPIase FKBP-type domain.

This sequence belongs to the FKBP-type PPIase family. Interacts with histone H3. In terms of tissue distribution, broadly expressed in leaves, flowers, stems and roots. Detected in root apical meristem region and pollen.

It is found in the nucleus. It catalyses the reaction [protein]-peptidylproline (omega=180) = [protein]-peptidylproline (omega=0). Its function is as follows. PPIases accelerate the folding of proteins. It catalyzes the cis-trans isomerization of proline imidic peptide bonds in oligopeptides. Histone chaperone possibly involved in H3/H4 deposition to the nucleosome. Associates with 18S rDNA chromatin and negatively regulates the level of its expression. This Arabidopsis thaliana (Mouse-ear cress) protein is Peptidyl-prolyl cis-trans isomerase FKBP53 (FKBP53).